Consider the following 235-residue polypeptide: Proteasome subunit beta type-1 (235 aa).

Positions 1 to 20 (MSRLGFEQFPDYQVPGMKHP) are excised as a propeptide.

This sequence belongs to the peptidase T1B family. In terms of assembly, the 26S proteasome consists of a 20S proteasome core and two 19S regulatory subunits. The 20S proteasome core is composed of 28 subunits that are arranged in four stacked rings, resulting in a barrel-shaped structure. The two end rings are each formed by seven alpha subunits, and the two central rings are each formed by seven beta subunits. The catalytic chamber with the active sites is on the inside of the barrel.

It is found in the cytoplasm. Its subcellular location is the nucleus. Functionally, non-catalytic component of the proteasome, a multicatalytic proteinase complex which is characterized by its ability to cleave peptides with Arg, Phe, Tyr, Leu, and Glu adjacent to the leaving group at neutral or slightly basic pH. The proteasome has an ATP-dependent proteolytic activity. The polypeptide is Proteasome subunit beta type-1 (Prosbeta6) (Drosophila melanogaster (Fruit fly)).